Reading from the N-terminus, the 661-residue chain is UvrABC system protein C (661 aa).

Residues 25-104 (AEPGCYLMRD…IKNHQPHFNV (80 aa)) enclose the GIY-YIG domain. One can recognise a UVR domain in the interval 214–249 (DELQHLLQEQMERYAERMDYESAARVRDQLQGLDQL). The span at 636–652 (FFHPSDEGTDADARAAL) shows a compositional bias: basic and acidic residues. A disordered region spans residues 636–661 (FFHPSDEGTDADARAALEEQPQELSA).

This sequence belongs to the UvrC family. As to quaternary structure, interacts with UvrB in an incision complex.

Its subcellular location is the cytoplasm. Functionally, the UvrABC repair system catalyzes the recognition and processing of DNA lesions. UvrC both incises the 5' and 3' sides of the lesion. The N-terminal half is responsible for the 3' incision and the C-terminal half is responsible for the 5' incision. The protein is UvrABC system protein C of Synechococcus sp. (strain CC9605).